A 721-amino-acid polypeptide reads, in one-letter code: BBSome complex member BBS2 (721 aa).

Residues 325 to 369 are a coiled coil; it reads RGNLMDTSAEQDLIRELSQKKQNLLLELRNYEENAKAELASPLNE.

Part of BBSome complex, that contains BBS1, BBS2, BBS4, BBS5, BBS7, BBS8/TTC8, BBS9 and BBIP10. Interacts (via C-terminus) with BBS7. Interacts (via coiled coil domain) with MKKS. Interacts with CCDC28B and ALDOB. Interacts with DLEC1. As to expression, widely expressed.

The protein resides in the cell projection. Its subcellular location is the cilium membrane. It localises to the cytoplasm. It is found in the cytoskeleton. The protein localises to the microtubule organizing center. The protein resides in the centrosome. Its subcellular location is the centriolar satellite. In terms of biological role, the BBSome complex is thought to function as a coat complex required for sorting of specific membrane proteins to the primary cilia. The BBSome complex is required for ciliogenesis but is dispensable for centriolar satellite function. This ciliogenic function is mediated in part by the Rab8 GDP/GTP exchange factor, which localizes to the basal body and contacts the BBSome. Rab8(GTP) enters the primary cilium and promotes extension of the ciliary membrane. Firstly the BBSome associates with the ciliary membrane and binds to RAB3IP/Rabin8, the guanosyl exchange factor (GEF) for Rab8 and then the Rab8-GTP localizes to the cilium and promotes docking and fusion of carrier vesicles to the base of the ciliary membrane. The BBSome complex, together with the LTZL1, controls SMO ciliary trafficking and contributes to the sonic hedgehog (SHH) pathway regulation. Required for proper BBSome complex assembly and its ciliary localization. The chain is BBSome complex member BBS2 from Homo sapiens (Human).